We begin with the raw amino-acid sequence, 459 residues long: Bifunctional protein GlmU (459 aa).

The interval 1–230 is pyrophosphorylase; that stretch reads MSNRFAVILA…FDETLGVNDR (230 aa). UDP-N-acetyl-alpha-D-glucosamine is bound by residues 9–12, Lys-23, Gln-73, and 78–79; these read LAAG and GT. Asp-103 contacts Mg(2+). The UDP-N-acetyl-alpha-D-glucosamine site is built by Gly-140, Glu-155, Asn-170, and Asn-228. Position 228 (Asn-228) interacts with Mg(2+). Residues 231–251 form a linker region; it reads VALSQAEIIMKNRINRKNMVN. The segment at 252–459 is N-acetyltransferase; sequence GVTIIDPSNT…VDQLLNKKKS (208 aa). Positions 333 and 351 each coordinate UDP-N-acetyl-alpha-D-glucosamine. The active-site Proton acceptor is His-363. Residues Tyr-366 and Asn-377 each coordinate UDP-N-acetyl-alpha-D-glucosamine. Residues 386–387, Ala-423, and Arg-440 each bind acetyl-CoA; that span reads NY.

In the N-terminal section; belongs to the N-acetylglucosamine-1-phosphate uridyltransferase family. This sequence in the C-terminal section; belongs to the transferase hexapeptide repeat family. Homotrimer. The cofactor is Mg(2+).

It is found in the cytoplasm. It carries out the reaction alpha-D-glucosamine 1-phosphate + acetyl-CoA = N-acetyl-alpha-D-glucosamine 1-phosphate + CoA + H(+). The catalysed reaction is N-acetyl-alpha-D-glucosamine 1-phosphate + UTP + H(+) = UDP-N-acetyl-alpha-D-glucosamine + diphosphate. Its pathway is nucleotide-sugar biosynthesis; UDP-N-acetyl-alpha-D-glucosamine biosynthesis; N-acetyl-alpha-D-glucosamine 1-phosphate from alpha-D-glucosamine 6-phosphate (route II): step 2/2. It functions in the pathway nucleotide-sugar biosynthesis; UDP-N-acetyl-alpha-D-glucosamine biosynthesis; UDP-N-acetyl-alpha-D-glucosamine from N-acetyl-alpha-D-glucosamine 1-phosphate: step 1/1. It participates in bacterial outer membrane biogenesis; LPS lipid A biosynthesis. Functionally, catalyzes the last two sequential reactions in the de novo biosynthetic pathway for UDP-N-acetylglucosamine (UDP-GlcNAc). The C-terminal domain catalyzes the transfer of acetyl group from acetyl coenzyme A to glucosamine-1-phosphate (GlcN-1-P) to produce N-acetylglucosamine-1-phosphate (GlcNAc-1-P), which is converted into UDP-GlcNAc by the transfer of uridine 5-monophosphate (from uridine 5-triphosphate), a reaction catalyzed by the N-terminal domain. This is Bifunctional protein GlmU from Bacillus thuringiensis subsp. konkukian (strain 97-27).